A 352-amino-acid polypeptide reads, in one-letter code: Putative killer cell immunoglobulin-like receptor-like protein KIR3DX1 (352 aa).

The signal sequence occupies residues 1–16; sequence MAPKLITVLCLGFCLN. Ig-like C2-type domains lie at 17–112 and 224–311; these read QKIC…NSLK and PSLS…VTRC. Intrachain disulfides connect cysteine 49/cysteine 94 and cysteine 244/cysteine 295. Asparagine 78 carries N-linked (GlcNAc...) asparagine glycosylation.

Expressed in NK-cells.

It is found in the secreted. This Homo sapiens (Human) protein is Putative killer cell immunoglobulin-like receptor-like protein KIR3DX1 (KIR3DX1).